Here is a 454-residue protein sequence, read N- to C-terminus: C4-dicarboxylate transport protein (454 aa).

Transmembrane regions (helical) follow at residues 33-53 (VQVL…PDIG), 66-86 (LVKM…IAGM), 101-121 (IYFL…ANLV), 148-168 (EQSI…GAFA), 170-190 (GDIL…AIVG), 210-230 (LVAI…AFTI), 243-263 (MLIG…LGAV), 354-374 (LLLV…AGFI), and 377-397 (AATL…ILGI).

It belongs to the dicarboxylate/amino acid:cation symporter (DAACS) (TC 2.A.23) family.

The protein resides in the cell inner membrane. Functionally, responsible for the transport of dicarboxylates such as succinate, fumarate, and malate from the periplasm across the membrane. The polypeptide is C4-dicarboxylate transport protein (Sinorhizobium medicae (strain WSM419) (Ensifer medicae)).